The sequence spans 321 residues: Mitochondrial thiamine pyrophosphate carrier 1 (321 aa).

Solcar repeat units lie at residues 12–110, 121–207, and 216–311; these read GSRQ…ISQM, PSSA…LKPV, and PLGS…AMGI. 6 helical membrane-spanning segments follow: residues 17–38, 91–107, 127–147, 182–199, 213–231, and 286–303; these read VVVAGAAAGLVSRFVIAPLDVI, LLYLTYGSVQFSAYTNI, FISGAGAGAAATTVTYPLDLL, GLGAGVSQIVPYMGLFFA, LPLPLGSSDAVAGVVASVV, and GLTVSLLKAAPASAVTMW.

It belongs to the mitochondrial carrier (TC 2.A.29) family.

Its subcellular location is the mitochondrion inner membrane. Functionally, mitochondrial transporter that mediates uptake of thiamine pyrophosphate (ThPP) into mitochondria. The sequence is that of Mitochondrial thiamine pyrophosphate carrier 1 (TPC1) from Phaeosphaeria nodorum (strain SN15 / ATCC MYA-4574 / FGSC 10173) (Glume blotch fungus).